The following is a 474-amino-acid chain: tRNA-2-methylthio-N(6)-dimethylallyladenosine synthase (474 aa).

An MTTase N-terminal domain is found at 21–138 (ERVYVETQGC…LPQMLARRRS (118 aa)). [4Fe-4S] cluster is bound by residues C30, C67, C101, C175, C179, and C182. The Radical SAM core domain occupies 161 to 395 (RAEGPTAYVS…ARLHEQQSAA (235 aa)). One can recognise a TRAM domain in the interval 397-460 (RALLGTRQSV…THSLRGRVVS (64 aa)).

This sequence belongs to the methylthiotransferase family. MiaB subfamily. As to quaternary structure, monomer. [4Fe-4S] cluster serves as cofactor.

It localises to the cytoplasm. The catalysed reaction is N(6)-dimethylallyladenosine(37) in tRNA + (sulfur carrier)-SH + AH2 + 2 S-adenosyl-L-methionine = 2-methylsulfanyl-N(6)-dimethylallyladenosine(37) in tRNA + (sulfur carrier)-H + 5'-deoxyadenosine + L-methionine + A + S-adenosyl-L-homocysteine + 2 H(+). In terms of biological role, catalyzes the methylthiolation of N6-(dimethylallyl)adenosine (i(6)A), leading to the formation of 2-methylthio-N6-(dimethylallyl)adenosine (ms(2)i(6)A) at position 37 in tRNAs that read codons beginning with uridine. The chain is tRNA-2-methylthio-N(6)-dimethylallyladenosine synthase from Halorhodospira halophila (strain DSM 244 / SL1) (Ectothiorhodospira halophila (strain DSM 244 / SL1)).